We begin with the raw amino-acid sequence, 74 residues long: uncharacterized protein (74 aa).

This is an uncharacterized protein from Dictyostelium discoideum (Social amoeba).